Consider the following 563-residue polypeptide: Arginine--tRNA ligase (563 aa).

Positions 121–131 (PNIAKPFSIGH) match the 'HIGH' region motif.

The protein belongs to the class-I aminoacyl-tRNA synthetase family. In terms of assembly, monomer.

It localises to the cytoplasm. The catalysed reaction is tRNA(Arg) + L-arginine + ATP = L-arginyl-tRNA(Arg) + AMP + diphosphate. The protein is Arginine--tRNA ligase of Streptococcus pneumoniae (strain Taiwan19F-14).